Consider the following 128-residue polypeptide: Probable 4-amino-4-deoxy-L-arabinose-phosphoundecaprenol flippase subunit ArnF (128 aa).

The Cytoplasmic portion of the chain corresponds to 1-2; the sequence is MC. A helical membrane pass occupies residues 3-23; that stretch reads LIWGLFSVIIASVAQLSLGFA. Topologically, residues 24–35 are periplasmic; sequence ASHLPPMTHLWD. The helical transmembrane segment at 36–56 threads the bilayer; it reads FIAALLAFGLDARILLLGLLG. Over 57 to 76 the chain is Cytoplasmic; it reads YLLSVFCWYKTLHKLALSKA. A helical transmembrane segment spans residues 77 to 97; that stretch reads YALLSMSYVLVWIASMVLPGW. Over 98-100 the chain is Periplasmic; the sequence is EGT. A helical membrane pass occupies residues 101 to 121; it reads FSLKALLGVACIMSGLMLIFL. The Cytoplasmic portion of the chain corresponds to 122-128; that stretch reads PTTKQRY.

This sequence belongs to the ArnF family. Heterodimer of ArnE and ArnF.

Its subcellular location is the cell inner membrane. The protein operates within bacterial outer membrane biogenesis; lipopolysaccharide biosynthesis. Functionally, translocates 4-amino-4-deoxy-L-arabinose-phosphoundecaprenol (alpha-L-Ara4N-phosphoundecaprenol) from the cytoplasmic to the periplasmic side of the inner membrane. This is Probable 4-amino-4-deoxy-L-arabinose-phosphoundecaprenol flippase subunit ArnF from Shigella flexneri.